Consider the following 542-residue polypeptide: 4-coumarate--CoA ligase-like 5 (542 aa).

The ATP site is built by serine 204, serine 205, glycine 206, threonine 207, threonine 208, and lysine 212. Phenylalanine 262 lines the (E)-4-coumaroyl-AMP pocket. Arginine 282 provides a ligand contact to CoA. An SBD1 region spans residues aspartate 284 to glutamine 353. (E)-4-coumaroyl-AMP-binding residues include glycine 331, glutamine 353, glycine 354, and threonine 358. Glutamine 353, glycine 354, threonine 358, aspartate 418, and arginine 433 together coordinate ATP. Positions glycine 354–tyrosine 397 are SBD2. 2 residues coordinate (E)-4-coumaroyl-AMP: lysine 435 and lysine 439. CoA contacts are provided by lysine 441 and glycine 442. Lysine 524 serves as a coordination point for ATP.

The protein belongs to the ATP-dependent AMP-binding enzyme family. Mg(2+) is required as a cofactor.

It catalyses the reaction (E)-4-coumarate + ATP + CoA = (E)-4-coumaroyl-CoA + AMP + diphosphate. The enzyme catalyses (E)-4-coumarate + ATP + H(+) = (E)-4-coumaroyl-AMP + diphosphate. The catalysed reaction is (E)-4-coumaroyl-AMP + CoA = (E)-4-coumaroyl-CoA + AMP + H(+). Its function is as follows. Carboxylate--CoA ligase that may use 4-coumarate as substrate. Follows a two-step reaction mechanism, wherein the carboxylate substrate first undergoes adenylation by ATP, followed by a thioesterification in the presence of CoA to yield the final CoA thioester. The polypeptide is 4-coumarate--CoA ligase-like 5 (4CLL5) (Oryza sativa subsp. japonica (Rice)).